The sequence spans 723 residues: MYKAVSKRVTRSSGSGLKQTNVDNGGEISPTVDRVSEQGKSSEAGSHMPTDANGNGHLHHEIMDHGKGNEEQKPTPQTVKKDSNTNTKFSGSHRELVIGLPCRGQFEIHNRSRASTSSKRLGGGGERNVLFASHKRAQRSKEDAGPSSVVANSTPVGRPKKKNKTMNKGQVREDDEYTRIKKKLRYFLNRINYEQSLIDAYSLEGWKGSSLEKIRPEKELERATKEILRRKLKIRDLFQHLDTLCAEGSLPESLFDTDGEISSEDIFCAKCGSKDLSVDNDIILCDGFCDRGFHQYCLEPPLRKEDIPPDDEGWLCPGCDCKDDSLDLLNDSLGTKFSVSDSWEKIFPEAAAALVGGGQNLDCDLPSDDSDDEEYDPDCLNDNENDEDGSDDNEESENEDGSSDETEFTSASDEMIESFKEGKDIMKDVMALPSDDSEDDDYDPDAPTCDDDKESSNSDCTSDTEDLETSFKGDETNQQAEDTPLEDPGRQTSQLQGDAILESDVGLDDGPAGVSRRRNVERLDYKKLYDEEYDNVPTSSSDDDDWDKTARMGKEDSESEDEGDTVPLKQSSNAEDHTSKKLIRKSKRADKKDTLEMPQEGPGENGGSGEIEKSSSSACKQTDPKTQRLYISFQENQYPDKATKESLAKELQMTVKQVNNWFKHRRWSINSKPLVSEENVEKLKTGKEGECETSVAGSSKQTMETESVAEKPTNTGSRKRRRK.

Positions 1 to 10 (MYKAVSKRVT) are enriched in basic residues. Disordered stretches follow at residues 1-94 (MYKA…GSHR) and 135-173 (KRAQRSKEDAGPSSVVANSTPVGRPKKKNKTMNKGQVRE). Residues 11–23 (RSSGSGLKQTNVD) are compositionally biased toward polar residues. Residues 58-83 (LHHEIMDHGKGNEEQKPTPQTVKKDS) are compositionally biased toward basic and acidic residues. The PHD-type zinc-finger motif lies at 265–322 (DIFCAKCGSKDLSVDNDIILCDGFCDRGFHQYCLEPPLRKEDIPPDDEGWLCPGCDCK). Disordered regions lie at residues 357–628 (GGQN…KTQR) and 680–723 (VEKL…RRRK). Residues 365-407 (LPSDDSDDEEYDPDCLNDNENDEDGSDDNEESENEDGSSDETE) show a composition bias toward acidic residues. Positions 417–427 (ESFKEGKDIMK) are enriched in basic and acidic residues. The segment covering 435 to 453 (DDSEDDDYDPDAPTCDDDK) has biased composition (acidic residues). 2 stretches are compositionally biased toward basic and acidic residues: residues 518 to 530 (RNVERLDYKKLYD) and 547 to 556 (DKTARMGKED). Residues 580 to 589 (KKLIRKSKRA) are compositionally biased toward basic residues. The homeobox DNA-binding region spans 614–673 (SSSSACKQTDPKTQRLYISFQENQYPDKATKESLAKELQMTVKQVNNWFKHRRWSINSKP). Over residues 680-690 (VEKLKTGKEGE) the composition is skewed to basic and acidic residues. The segment covering 695–705 (VAGSSKQTMET) has biased composition (polar residues).

It belongs to the PHD-associated homeobox family. In terms of tissue distribution, primarily detected in root tissue.

The protein localises to the nucleus. Its function is as follows. Binds only to large DNA fragments. Recognizes a DNA fragment carrying 8 copies of box7 motif of the light-induced cab-E promoter of Nicotiana plumbaginifolia. Also recognizes the box7m1 motif. The polypeptide is Homeobox protein HAT3.1 (HAT3.1) (Arabidopsis thaliana (Mouse-ear cress)).